Consider the following 593-residue polypeptide: Melanopsin-A (593 aa).

The Extracellular portion of the chain corresponds to 1–77; sequence MMSGAAHSVR…VDVPDHAHYT (77 aa). A helical transmembrane segment spans residues 78–98; it reads IGAVILTVGITGMLGNFLVIY. At 99–112 the chain is on the cytoplasmic side; that stretch reads AFSRSRTLRTPANL. The chain crosses the membrane as a helical span at residues 113–133; it reads FIINLAITDFLMCATQAPIFF. Residues 134–150 are Extracellular-facing; it reads TTSMHKRWIFGEKGCEL. A disulfide bridge links cysteine 148 with cysteine 226. Residues 151 to 171 form a helical membrane-spanning segment; the sequence is YAFCGALFGICSMITLMVIAV. Over 172–191 the chain is Cytoplasmic; the sequence is DRYFVITRPLASIGVLSQKR. Residues 192-212 form a helical membrane-spanning segment; sequence ALLILLVAWVYSLGWSLPPFF. Residues 213–243 lie on the Extracellular side of the membrane; sequence GWSAYVPEGLLTSCTWDYMTFTPSVRAYTML. A helical transmembrane segment spans residues 244–264; that stretch reads LFIFVFFIPLIVIIYCYFFIF. The Cytoplasmic segment spans residues 265–300; the sequence is RSIRTTNEAVGKINGDNKRDSMKRFQRLKNEWKMAK. The chain crosses the membrane as a helical span at residues 301-321; that stretch reads IALIVILMYVISWSPYSTVAL. Residues 322 to 336 are Extracellular-facing; it reads TAFAGYSDFLTPYMN. A helical membrane pass occupies residues 337-357; sequence SVPAVIAKASAIHNPIIYAIT. Lysine 344 bears the N6-(retinylidene)lysine mark. The Cytoplasmic portion of the chain corresponds to 358 to 593; sequence HPKYRLAIAK…HIDNHRPQYL (236 aa). Disordered stretches follow at residues 397–449 and 547–593; these read TVTS…RQVS and RSNV…PQYL. Positions 414–449 are enriched in polar residues; sequence TGKSRLSSASDSESGWTDTEADLSSMSSRPASRQVS. Positions 581–593 are enriched in basic and acidic residues; that stretch reads ESGHIDNHRPQYL.

The protein belongs to the G-protein coupled receptor 1 family. Opsin subfamily.

The protein resides in the cell membrane. Its function is as follows. Photoreceptor implicated in non-image-forming responses to light. May be able to isomerize covalently bound all-trans retinal back to 11-cis retinal. This is Melanopsin-A (opn4a) from Danio rerio (Zebrafish).